A 328-amino-acid chain; its full sequence is Glycerol-3-phosphate dehydrogenase [NAD(P)+] (328 aa).

The NADPH site is built by W11, R30, and K103. K103, G132, and S134 together coordinate sn-glycerol 3-phosphate. Residue A136 participates in NADPH binding. Sn-glycerol 3-phosphate-binding residues include K187, D240, S250, R251, and N252. The active-site Proton acceptor is the K187. Residue R251 coordinates NADPH. Positions 275 and 277 each coordinate NADPH.

The protein belongs to the NAD-dependent glycerol-3-phosphate dehydrogenase family.

The protein localises to the cytoplasm. The enzyme catalyses sn-glycerol 3-phosphate + NAD(+) = dihydroxyacetone phosphate + NADH + H(+). It catalyses the reaction sn-glycerol 3-phosphate + NADP(+) = dihydroxyacetone phosphate + NADPH + H(+). The protein operates within membrane lipid metabolism; glycerophospholipid metabolism. Functionally, catalyzes the reduction of the glycolytic intermediate dihydroxyacetone phosphate (DHAP) to sn-glycerol 3-phosphate (G3P), the key precursor for phospholipid synthesis. This Thiobacillus denitrificans (strain ATCC 25259 / T1) protein is Glycerol-3-phosphate dehydrogenase [NAD(P)+].